The chain runs to 290 residues: Pre-mRNA-splicing factor cwf20 (290 aa).

2 disordered regions span residues 1–61 (MSLV…KSSF) and 114–134 (PNNSVSDLTSTGSSETVKKST). Residues 114 to 128 (PNNSVSDLTSTGSSE) are compositionally biased toward polar residues.

In terms of assembly, belongs to the 40S cdc5-associated complex (or cwf complex), a spliceosome sub-complex reminiscent of a late-stage spliceosome composed of the U2, U5 and U6 snRNAs and at least brr2, cdc5, cwf2/prp3, cwf3/syf1, cwf4/syf3, cwf5/ecm2, spp42/cwf6, cwf7/spf27, cwf8, cwf9, cwf10, cwf11, cwf12, prp45/cwf13, cwf14, cwf15, cwf16, cwf17, cwf18, cwf19, cwf20, cwf21, cwf22, cwf23, cwf24, cwf25, cwf26, cyp7/cwf27, cwf28, cwf29/ist3, lea1, msl1, prp5/cwf1, prp10, prp12/sap130, prp17, prp22, sap61, sap62, sap114, sap145, slu7, smb1, smd1, smd3, smf1, smg1 and syf2.

It localises to the nucleus. Involved in mRNA splicing where it associates with cdc5 and the other cwf proteins as part of the spliceosome. The protein is Pre-mRNA-splicing factor cwf20 (cwf20) of Schizosaccharomyces pombe (strain 972 / ATCC 24843) (Fission yeast).